The sequence spans 604 residues: Uptake hydrogenase large subunit (604 aa).

Residues Cys76, Cys79, Cys583, and Cys586 each coordinate Ni(2+).

This sequence belongs to the [NiFe]/[NiFeSe] hydrogenase large subunit family. In terms of assembly, heterodimer of a large and a small subunit. The cofactor is Ni(2+).

It is found in the cell membrane. The catalysed reaction is H2 + A = AH2. This enzyme recycles the H(2) produced by nitrogenase to increase the production of ATP and to protect nitrogenase against inhibition or damage by O(2) under carbon- or phosphate-limited conditions. The chain is Uptake hydrogenase large subunit (hoxL) from Afipia carboxidovorans (strain ATCC 49405 / DSM 1227 / KCTC 32145 / OM5) (Oligotropha carboxidovorans).